The sequence spans 249 residues: Proteasome subunit alpha type-7-1A (249 aa).

Belongs to the peptidase T1A family. In terms of assembly, the 26S proteasome consists of a 20S proteasome core and two 19S regulatory subunits. The 20S proteasome core is composed of 28 subunits that are arranged in four stacked rings, resulting in a barrel-shaped structure. The two end rings are each formed by seven alpha subunits, and the two central rings are each formed by seven beta subunits. The catalytic chamber with the active sites is on the inside of the barrel. Testis specific.

The protein localises to the cytoplasm. Its subcellular location is the nucleus. Its function is as follows. The proteasome is a multicatalytic proteinase complex which is characterized by its ability to cleave peptides with Arg, Phe, Tyr, Leu, and Glu adjacent to the leaving group at neutral or slightly basic pH. The proteasome has an ATP-dependent proteolytic activity. This is Proteasome subunit alpha type-7-1A (Prosalpha4T1) from Drosophila melanogaster (Fruit fly).